The primary structure comprises 278 residues: Cell division protein FtsQ (278 aa).

The Cytoplasmic portion of the chain corresponds to 1 to 6 (MNATLR). A helical membrane pass occupies residues 7–27 (ILAWLIAVALVALPVVAVLNG). Topologically, residues 28-278 (WVGAERWPLA…SPFAIPGFKT (251 aa)) are periplasmic. Positions 34–103 (WPLARLRVSG…DVLEVHVVEH (70 aa)) constitute a POTRA domain.

This sequence belongs to the FtsQ/DivIB family. FtsQ subfamily. As to quaternary structure, part of a complex composed of FtsB, FtsL and FtsQ.

Its subcellular location is the cell inner membrane. In terms of biological role, essential cell division protein. May link together the upstream cell division proteins, which are predominantly cytoplasmic, with the downstream cell division proteins, which are predominantly periplasmic. May control correct divisome assembly. The protein is Cell division protein FtsQ of Xanthomonas campestris pv. campestris (strain ATCC 33913 / DSM 3586 / NCPPB 528 / LMG 568 / P 25).